Reading from the N-terminus, the 301-residue chain is METDGRLKAYKFVAYAAVGFSIAAVASVLLTLPMVYSYVSHVRQQMHHEINFCKGSAKDIFAEVNYMKANAGPVPPRNRTTRQAYGGPEVNPAPNLQCEGCCLPGPPGPAGAPGKPGKPGRPGAPGTPGTPGKPPVAPCEPTTPPPCKPCPQGPPGPPGPPGAPGDPGEAGTPGRPGTDAAPGSPGPRGPPGPAGEAGAPGPAGEPGTPAISEPLTPGAPGEPGDSGPPGPPGPPGAPGNDGPPGPPGPKGAPGPDGPPGVDGQSGPPGPPGPAGTPGEKGICPKYCALDGGVFFEDGTRR.

Positions 1 to 37 are cleaved as a signal peptide; that stretch reads METDGRLKAYKFVAYAAVGFSIAAVASVLLTLPMVYS. The furin-like endopeptidase recognition region stretch occupies residues 79 to 82; the sequence is RTTR. 4 triple-helical region regions span residues 105–134, 153–179, 183–209, and 218–283; these read GPPG…PGKP, GPPG…PGTD, GSPG…PGTP, and GAPG…KGIC. Positions 109-284 are disordered; sequence PAGAPGKPGK…GTPGEKGICP (176 aa). Composition is skewed to pro residues over residues 131 to 164 and 184 to 193; these read PGKP…PGAP and SPGPRGPPGP. The span at 194 to 210 shows a compositional bias: low complexity; the sequence is AGEAGAPGPAGEPGTPA. Residues 226 to 258 show a composition bias toward pro residues; it reads SGPPGPPGPPGAPGNDGPPGPPGPKGAPGPDGP.

It belongs to the cuticular collagen family. Collagen polypeptide chains are complexed within the cuticle by disulfide bonds and other types of covalent cross-links.

The protein localises to the secreted. Its subcellular location is the extracellular space. Functionally, secreted collagen that forms part of the nematode cuticle, which functions as an exoskeleton and a barrier to protect the worm from its environment. Secretion and subsequent incorporation into the cuticle is likely mediated by bli-4, which probably cleaves at the N-terminal consensus furin cleavage site. The chain is Cuticle collagen 1 (sqt-3) from Caenorhabditis elegans.